Reading from the N-terminus, the 75-residue chain is Conotoxin TsMEKL-011 (75 aa).

The first 19 residues, Met1 to Ala19, serve as a signal peptide directing secretion. Positions Leu20–Arg45 are excised as a propeptide. 3 disulfide bridges follow: Cys49-Cys63, Cys56-Cys67, and Cys62-Cys71.

The protein belongs to the conotoxin O2 superfamily. In terms of tissue distribution, expressed by the venom duct.

It is found in the secreted. This chain is Conotoxin TsMEKL-011, found in Conus tessulatus (Tessellate cone).